A 274-amino-acid chain; its full sequence is 2,3,4,5-tetrahydropyridine-2,6-dicarboxylate N-succinyltransferase (274 aa).

Substrate contacts are provided by R104 and D141.

Belongs to the transferase hexapeptide repeat family. Homotrimer.

It is found in the cytoplasm. The enzyme catalyses (S)-2,3,4,5-tetrahydrodipicolinate + succinyl-CoA + H2O = (S)-2-succinylamino-6-oxoheptanedioate + CoA. It participates in amino-acid biosynthesis; L-lysine biosynthesis via DAP pathway; LL-2,6-diaminopimelate from (S)-tetrahydrodipicolinate (succinylase route): step 1/3. The chain is 2,3,4,5-tetrahydropyridine-2,6-dicarboxylate N-succinyltransferase (dapD) from Escherichia coli O157:H7.